A 495-amino-acid polypeptide reads, in one-letter code: Aspartyl/glutamyl-tRNA(Asn/Gln) amidotransferase subunit B (495 aa).

The protein belongs to the GatB/GatE family. GatB subfamily. Heterotrimer of A, B and C subunits.

It carries out the reaction L-glutamyl-tRNA(Gln) + L-glutamine + ATP + H2O = L-glutaminyl-tRNA(Gln) + L-glutamate + ADP + phosphate + H(+). The enzyme catalyses L-aspartyl-tRNA(Asn) + L-glutamine + ATP + H2O = L-asparaginyl-tRNA(Asn) + L-glutamate + ADP + phosphate + 2 H(+). Allows the formation of correctly charged Asn-tRNA(Asn) or Gln-tRNA(Gln) through the transamidation of misacylated Asp-tRNA(Asn) or Glu-tRNA(Gln) in organisms which lack either or both of asparaginyl-tRNA or glutaminyl-tRNA synthetases. The reaction takes place in the presence of glutamine and ATP through an activated phospho-Asp-tRNA(Asn) or phospho-Glu-tRNA(Gln). This Methylocella silvestris (strain DSM 15510 / CIP 108128 / LMG 27833 / NCIMB 13906 / BL2) protein is Aspartyl/glutamyl-tRNA(Asn/Gln) amidotransferase subunit B.